A 392-amino-acid chain; its full sequence is GTPase Obg (392 aa).

The 159-residue stretch at 1–159 folds into the Obg domain; sequence MKFVDEATIL…RDLQLELMLL (159 aa). The tract at residues 127–148 is disordered; the sequence is NTRFKSSVNRTPRQKTMGTPGD. Over residues 129 to 143 the composition is skewed to polar residues; that stretch reads RFKSSVNRTPRQKTM. The 174-residue stretch at 160–333 folds into the OBG-type G domain; the sequence is ADVGMLGMPN…LCWDVMTFII (174 aa). GTP contacts are provided by residues 166 to 173, 191 to 195, 213 to 216, 283 to 286, and 314 to 316; these read GMPNAGKS, FTTLV, DIPG, NKID, and SAA. Positions 173 and 193 each coordinate Mg(2+). Residues 362-386 are compositionally biased toward acidic residues; sequence EEAEAEAEDDEDWDDDWDEDDEEGV. Residues 362–392 form a disordered region; sequence EEAEAEAEDDEDWDDDWDEDDEEGVEFIYKR.

Belongs to the TRAFAC class OBG-HflX-like GTPase superfamily. OBG GTPase family. As to quaternary structure, monomer. Requires Mg(2+) as cofactor.

The protein resides in the cytoplasm. In terms of biological role, an essential GTPase which binds GTP, GDP and possibly (p)ppGpp with moderate affinity, with high nucleotide exchange rates and a fairly low GTP hydrolysis rate. Plays a role in control of the cell cycle, stress response, ribosome biogenesis and in those bacteria that undergo differentiation, in morphogenesis control. The polypeptide is GTPase Obg (Klebsiella pneumoniae subsp. pneumoniae (strain ATCC 700721 / MGH 78578)).